The sequence spans 172 residues: MPLLDSFTVDHTRMNAPAVRVAKTMQTPKGDTITVFDLRFTAPNKDILSEKGIHTLEHLYAGFMRNHLNGDSVEIIDISPMGCRTGFYMSLIGTPSEQQVADAWIAAMEDVLKVESQNKIPELNEYQCGTAAMHSLKEAQQIAKNILDAGVSVNKNDELALPESMLKELRID.

Residues His-54, His-58, and Cys-128 each contribute to the Fe cation site.

It belongs to the LuxS family. In terms of assembly, homodimer. It depends on Fe cation as a cofactor.

It carries out the reaction S-(5-deoxy-D-ribos-5-yl)-L-homocysteine = (S)-4,5-dihydroxypentane-2,3-dione + L-homocysteine. Involved in the synthesis of autoinducer 2 (AI-2) which is secreted by bacteria and is used to communicate both the cell density and the metabolic potential of the environment. The regulation of gene expression in response to changes in cell density is called quorum sensing. Catalyzes the transformation of S-ribosylhomocysteine (RHC) to homocysteine (HC) and 4,5-dihydroxy-2,3-pentadione (DPD). This is S-ribosylhomocysteine lyase from Vibrio alginolyticus.